Reading from the N-terminus, the 78-residue chain is Small ribosomal subunit protein uS19m (78 aa).

It belongs to the universal ribosomal protein uS19 family.

It localises to the mitochondrion. In Acanthamoeba castellanii (Amoeba), this protein is Small ribosomal subunit protein uS19m (RPS19).